Reading from the N-terminus, the 565-residue chain is MANSPFPLRSQVVTQGVQRSPNRAMLRAVGFRDEDFGKPIVGIANAHSTLTPCNMGIQTLAERAEAALRTAGCMPQVFGTITISDGISMGTEGMKYSLVSREVIADSIETVVNGQSMDGLLAIGGCDKNMPGAMIAMARLNVPSIFVYGGTIKPGHYNGRDLTIVSAFEAVGEFSAGRISEEELLAVERHACPGAGSCGGMYTANTMSSAFEAMGMSLPYSSTMAAEDEEKAESAAQSAKVLAEAIKANIRPRDIITRKSIENAISVIMAVGGSTNAVLHFLAIAHAAEVPLTLDDFETIRARVPVLCDLKPSGRFVATDLHRAGGIPQVMKMLLNHGLLHGDCLTISGQTIVEVLRDVPDEPSPDQEVIRPWHSPLYPQGHLAILKGNLAPEGAVAKITGVKNPQITGPARVFDSEESCLQAILSGQIRAGDVVVIRYEGPKGGPGMREMLSPTSAIIGAGLGDSVGLITDGRFSGGTYGMVVGHVAPEAYVGGTIALVEEGDLITIDAPARQLHLHVSEEELARRRARWSPPEPRYKRGTLAKYAKLVSSSSLGAVTDLNLWD.

Cys53 lines the [2Fe-2S] cluster pocket. Residue Asp85 coordinates Mg(2+). [2Fe-2S] cluster is bound at residue Cys126. Positions 127 and 128 each coordinate Mg(2+). N6-carboxylysine is present on Lys128. Cys198 serves as a coordination point for [2Fe-2S] cluster. Residue Glu450 coordinates Mg(2+). The Proton acceptor role is filled by Ser476.

The protein belongs to the IlvD/Edd family. Homodimer. Requires [2Fe-2S] cluster as cofactor. Mg(2+) is required as a cofactor.

It carries out the reaction (2R)-2,3-dihydroxy-3-methylbutanoate = 3-methyl-2-oxobutanoate + H2O. It catalyses the reaction (2R,3R)-2,3-dihydroxy-3-methylpentanoate = (S)-3-methyl-2-oxopentanoate + H2O. Its pathway is amino-acid biosynthesis; L-isoleucine biosynthesis; L-isoleucine from 2-oxobutanoate: step 3/4. The protein operates within amino-acid biosynthesis; L-valine biosynthesis; L-valine from pyruvate: step 3/4. Functions in the biosynthesis of branched-chain amino acids. Catalyzes the dehydration of (2R,3R)-2,3-dihydroxy-3-methylpentanoate (2,3-dihydroxy-3-methylvalerate) into 2-oxo-3-methylpentanoate (2-oxo-3-methylvalerate) and of (2R)-2,3-dihydroxy-3-methylbutanoate (2,3-dihydroxyisovalerate) into 2-oxo-3-methylbutanoate (2-oxoisovalerate), the penultimate precursor to L-isoleucine and L-valine, respectively. The polypeptide is Dihydroxy-acid dehydratase (Synechococcus sp. (strain JA-2-3B'a(2-13)) (Cyanobacteria bacterium Yellowstone B-Prime)).